The primary structure comprises 532 residues: Cytokinin dehydrogenase 1 (532 aa).

A signal peptide spans 1–17 (MAAIYLLIAALIASSHA). N-linked (GlcNAc...) asparagine glycosylation is found at Asn52 and Asn63. One can recognise an FAD-binding PCMH-type domain in the interval 65–244 (TAALPAAVLF…TRARVAVEPA (180 aa)). FAD-binding residues include Phe100, Gly102, Arg103, and Gly104. At His105 the chain carries Pros-8alpha-FAD histidine. 2 residues coordinate FAD: Ser106 and Gln110. An N-linked (GlcNAc...) asparagine glycan is attached at Asn133. The FAD site is built by Asp168, Thr173, Ser179, Val183, and Ile234. N-linked (GlcNAc...) asparagine glycosylation is found at Asn321 and Asn432. Tyr490, Ser525, and Gln528 together coordinate FAD.

This sequence belongs to the oxygen-dependent FAD-linked oxidoreductase family. Monomer. The cofactor is FAD.

The protein localises to the secreted. The protein resides in the extracellular space. It carries out the reaction N(6)-dimethylallyladenine + A + H2O = 3-methyl-2-butenal + adenine + AH2. Its function is as follows. Catalyzes the oxidation of cytokinins, a family of N(6)-substituted adenine derivatives that are plant hormones, where the substituent is an isopentenyl group. This Oryza sativa subsp. japonica (Rice) protein is Cytokinin dehydrogenase 1 (CKX1).